A 175-amino-acid chain; its full sequence is Crossover junction endodeoxyribonuclease RuvC (175 aa).

Catalysis depends on residues D16, E76, and D148. Mg(2+) contacts are provided by D16, E76, and D148.

Belongs to the RuvC family. As to quaternary structure, homodimer which binds Holliday junction (HJ) DNA. The HJ becomes 2-fold symmetrical on binding to RuvC with unstacked arms; it has a different conformation from HJ DNA in complex with RuvA. In the full resolvosome a probable DNA-RuvA(4)-RuvB(12)-RuvC(2) complex forms which resolves the HJ. Mg(2+) is required as a cofactor.

It is found in the cytoplasm. The catalysed reaction is Endonucleolytic cleavage at a junction such as a reciprocal single-stranded crossover between two homologous DNA duplexes (Holliday junction).. The RuvA-RuvB-RuvC complex processes Holliday junction (HJ) DNA during genetic recombination and DNA repair. Endonuclease that resolves HJ intermediates. Cleaves cruciform DNA by making single-stranded nicks across the HJ at symmetrical positions within the homologous arms, yielding a 5'-phosphate and a 3'-hydroxyl group; requires a central core of homology in the junction. The consensus cleavage sequence is 5'-(A/T)TT(C/G)-3'. Cleavage occurs on the 3'-side of the TT dinucleotide at the point of strand exchange. HJ branch migration catalyzed by RuvA-RuvB allows RuvC to scan DNA until it finds its consensus sequence, where it cleaves and resolves the cruciform DNA. In Bradyrhizobium sp. (strain ORS 278), this protein is Crossover junction endodeoxyribonuclease RuvC.